The following is a 332-amino-acid chain: Ribosomal RNA small subunit methyltransferase H (332 aa).

Residues 42 to 44 (GGH), Asp62, Phe86, Asp105, and Gln112 contribute to the S-adenosyl-L-methionine site.

It belongs to the methyltransferase superfamily. RsmH family.

Its subcellular location is the cytoplasm. The catalysed reaction is cytidine(1402) in 16S rRNA + S-adenosyl-L-methionine = N(4)-methylcytidine(1402) in 16S rRNA + S-adenosyl-L-homocysteine + H(+). Functionally, specifically methylates the N4 position of cytidine in position 1402 (C1402) of 16S rRNA. In Cupriavidus pinatubonensis (strain JMP 134 / LMG 1197) (Cupriavidus necator (strain JMP 134)), this protein is Ribosomal RNA small subunit methyltransferase H.